A 458-amino-acid polypeptide reads, in one-letter code: Chitin deacetylase 2 (458 aa).

The signal sequence occupies residues Met1–Ala51. Residues Asn87, Asn99, and Asn125 are each glycosylated (N-linked (GlcNAc...) asparagine). Residues Met158 to Pro348 form the NodB homology domain. Catalysis depends on Asp165, which acts as the Proton acceptor. Position 165 (Asp165) interacts with acetate. Asp166 lines the Co(2+) pocket. Asn169 carries an N-linked (GlcNAc...) asparagine glycan. His215 and His219 together coordinate Co(2+). Residue Tyr256 participates in acetate binding. Residues Asn271 and Asn309 are each glycosylated (N-linked (GlcNAc...) asparagine). The active-site Proton donor is His322. N-linked (GlcNAc...) asparagine glycosylation is found at Asn326, Asn354, Asn363, Asn378, and Asn393. The tract at residues Ser382–Ala430 is disordered. Ser427 carries GPI-anchor amidated serine lipidation. Positions Ser428–Leu458 are cleaved as a propeptide — removed in mature form. An N-linked (GlcNAc...) asparagine glycan is attached at Asn429.

Belongs to the polysaccharide deacetylase family. Requires Co(2+) as cofactor. Glycosylated.

The protein localises to the secreted. It is found in the cell wall. The protein resides in the cell membrane. It carries out the reaction [(1-&gt;4)-N-acetyl-beta-D-glucosaminyl](n) + n H2O = chitosan + n acetate. Its function is as follows. Hydrolyzes the N-acetamido groups of N-acetyl-D-glucosamine residues in chitin to form chitosan and acetate. Chitosan is required to anchor melanin to the cell wall, for maintenance of cell wall integrity, and for cytokinesis. The protein is Chitin deacetylase 2 of Cryptococcus neoformans var. neoformans serotype D (strain B-3501A) (Filobasidiella neoformans).